Reading from the N-terminus, the 154-residue chain is MSGKVRLEDRVSAWAMPIVEELGLELIDVEWVKEGGNWYLRIFIDKEAGIEMEDCQEVSRRIDEILDREDPVAHSYSLEVSSPGIDRPLKSDRDYERFRGETVRITTFAPVMGAKEHLGELAGKNETSILIRKNDEEMAIPLTQVSSVRLYPGF.

This sequence belongs to the RimP family.

Its subcellular location is the cytoplasm. In terms of biological role, required for maturation of 30S ribosomal subunits. In Heliobacterium modesticaldum (strain ATCC 51547 / Ice1), this protein is Ribosome maturation factor RimP.